Reading from the N-terminus, the 220-residue chain is Adenylate kinase (220 aa).

10–15 (GAGKGT) contacts ATP. Positions 30 to 59 (STGDLFRANISQQTELGKLAKSYMDEGNLV) are NMP. AMP is bound by residues T31, R36, 57 to 59 (NLV), 85 to 88 (GFPR), and Q92. An LID region spans residues 126–164 (GRRICRNDSAHVFHVSYKPPKQEGVCDVCGGELYQRDDD). ATP-binding positions include R127 and 137–138 (VF). The AMP site is built by R161 and R172. ATP is bound at residue G200.

The protein belongs to the adenylate kinase family. As to quaternary structure, monomer.

It localises to the cytoplasm. The enzyme catalyses AMP + ATP = 2 ADP. It functions in the pathway purine metabolism; AMP biosynthesis via salvage pathway; AMP from ADP: step 1/1. In terms of biological role, catalyzes the reversible transfer of the terminal phosphate group between ATP and AMP. Plays an important role in cellular energy homeostasis and in adenine nucleotide metabolism. The sequence is that of Adenylate kinase from Streptomyces avermitilis (strain ATCC 31267 / DSM 46492 / JCM 5070 / NBRC 14893 / NCIMB 12804 / NRRL 8165 / MA-4680).